The sequence spans 466 residues: Soluble pyridine nucleotide transhydrogenase (466 aa).

36 to 45 (ERYHNVGGGC) contacts FAD.

The protein belongs to the class-I pyridine nucleotide-disulfide oxidoreductase family. Requires FAD as cofactor.

Its subcellular location is the cytoplasm. The catalysed reaction is NAD(+) + NADPH = NADH + NADP(+). Functionally, conversion of NADPH, generated by peripheral catabolic pathways, to NADH, which can enter the respiratory chain for energy generation. This chain is Soluble pyridine nucleotide transhydrogenase, found in Citrobacter koseri (strain ATCC BAA-895 / CDC 4225-83 / SGSC4696).